A 24-amino-acid chain; its full sequence is General odorant-binding protein (24 aa).

Belongs to the PBP/GOBP family. In terms of assembly, homodimer. Antenna.

Present in the aqueous fluid surrounding olfactory sensory dendrites and are thought to aid in the capture and transport of hydrophobic odorants into and through this fluid. This Antheraea polyphemus (Polyphemus moth) protein is General odorant-binding protein.